Reading from the N-terminus, the 105-residue chain is Met repressor (105 aa).

The protein belongs to the MetJ family. Homodimer.

It localises to the cytoplasm. Functionally, this regulatory protein, when combined with SAM (S-adenosylmethionine) represses the expression of the methionine regulon and of enzymes involved in SAM synthesis. This Hamiltonella defensa subsp. Acyrthosiphon pisum (strain 5AT) protein is Met repressor.